The sequence spans 94 residues: Co-chaperonin GroES (94 aa).

This sequence belongs to the GroES chaperonin family. In terms of assembly, heptamer of 7 subunits arranged in a ring. Interacts with the chaperonin GroEL.

It localises to the cytoplasm. Together with the chaperonin GroEL, plays an essential role in assisting protein folding. The GroEL-GroES system forms a nano-cage that allows encapsulation of the non-native substrate proteins and provides a physical environment optimized to promote and accelerate protein folding. GroES binds to the apical surface of the GroEL ring, thereby capping the opening of the GroEL channel. In Streptococcus agalactiae, this protein is Co-chaperonin GroES.